A 336-amino-acid chain; its full sequence is Corrinoid adenosyltransferase PduO (336 aa).

The pduON stretch occupies residues 1-185 (MAIYTRTGDA…IIREVSKRYL (185 aa)). The tract at residues 194-336 (KETTPVALSF…IAAINVGTHQ (143 aa)) is pduOC. Residue His207 participates in heme binding. Mg(2+)-binding residues include Glu215 and Gln218.

Belongs to the Cob(I)alamin adenosyltransferase family. PduO subfamily. The C-terminal domain (PduOC) forms stable octamers and also crystallizes as an octamer. Forms a complex with PduS. Requires heme b as cofactor. The cofactor is Mg(2+).

It localises to the bacterial microcompartment. The enzyme catalyses cob(I)alamin-[corrinoid adenosyltransferase] + ATP = apo-[corrinoid adenosyltransferase] + adenosylcob(III)alamin + triphosphate. The protein operates within polyol metabolism; 1,2-propanediol degradation. It participates in cofactor biosynthesis; adenosylcobalamin biosynthesis. Inhibited by ADP but not significantly by other nucleotides, inhibited by diphosphate and less well by triphosphate. Functionally, converts cob(I)alamin to adenosylcobalamin (adenosylcob(III)alamin), the cofactor for propanediol dehydratase. Found in the bacterial microcompartment (BMC) dedicated to 1,2-propanediol (1,2-PD) degradation. For adenosylcobalamin synthesis dATP can replace ATP, but no other nucleotides will substitute. PduS and PduO allow regeneration of the adenosylcobalamin cofactor within the BMC. The 1,2-PD-specific bacterial microcompartment (BMC) concentrates low levels of 1,2-PD catabolic enzymes, concentrates volatile reaction intermediates thus enhancing pathway flux and keeps the level of toxic, mutagenic propionaldehyde low. The chain is Corrinoid adenosyltransferase PduO from Salmonella typhimurium (strain LT2 / SGSC1412 / ATCC 700720).